The primary structure comprises 182 residues: UPF0149 protein CGSHiGG_07585 (182 aa).

The protein belongs to the UPF0149 family.

The polypeptide is UPF0149 protein CGSHiGG_07585 (Haemophilus influenzae (strain PittGG)).